Here is a 193-residue protein sequence, read N- to C-terminus: UPF0301 protein SCO2948 (193 aa).

This sequence belongs to the UPF0301 (AlgH) family.

The chain is UPF0301 protein SCO2948 from Streptomyces coelicolor (strain ATCC BAA-471 / A3(2) / M145).